The chain runs to 177 residues: NADH-quinone oxidoreductase subunit B (177 aa).

[4Fe-4S] cluster contacts are provided by Cys-56, Cys-57, Cys-121, and Cys-151.

This sequence belongs to the complex I 20 kDa subunit family. As to quaternary structure, NDH-1 is composed of 14 different subunits. Subunits NuoB, C, D, E, F, and G constitute the peripheral sector of the complex. It depends on [4Fe-4S] cluster as a cofactor.

It localises to the cell inner membrane. The catalysed reaction is a quinone + NADH + 5 H(+)(in) = a quinol + NAD(+) + 4 H(+)(out). NDH-1 shuttles electrons from NADH, via FMN and iron-sulfur (Fe-S) centers, to quinones in the respiratory chain. Couples the redox reaction to proton translocation (for every two electrons transferred, four hydrogen ions are translocated across the cytoplasmic membrane), and thus conserves the redox energy in a proton gradient. This is NADH-quinone oxidoreductase subunit B from Ruegeria pomeroyi (strain ATCC 700808 / DSM 15171 / DSS-3) (Silicibacter pomeroyi).